A 67-amino-acid chain; its full sequence is uncharacterized protein (67 aa).

This is an uncharacterized protein from Acidianus filamentous virus 2 (isolate Italy/Pozzuoli) (AFV-2).